The chain runs to 314 residues: DNA-directed RNA polymerase subunit alpha (314 aa).

The segment at 1–228 is alpha N-terminal domain (alpha-NTD); sequence MIEIEKPRIE…EHLNIFVGLT (228 aa). The alpha C-terminal domain (alpha-CTD) stretch occupies residues 245 to 314; that stretch reads KEKVLEMSIE…DLGLGLRKED (70 aa).

This sequence belongs to the RNA polymerase alpha chain family. As to quaternary structure, homodimer. The RNAP catalytic core consists of 2 alpha, 1 beta, 1 beta' and 1 omega subunit. When a sigma factor is associated with the core the holoenzyme is formed, which can initiate transcription.

The catalysed reaction is RNA(n) + a ribonucleoside 5'-triphosphate = RNA(n+1) + diphosphate. In terms of biological role, DNA-dependent RNA polymerase catalyzes the transcription of DNA into RNA using the four ribonucleoside triphosphates as substrates. This chain is DNA-directed RNA polymerase subunit alpha, found in Staphylococcus haemolyticus (strain JCSC1435).